We begin with the raw amino-acid sequence, 553 residues long: Putative transport protein YidE (553 aa).

Helical transmembrane passes span 4-24, 28-48, 65-85, 95-115, and 158-178; these read IALTVSVLALVAVVGLWIGNI, GVGFGIGGVLFGGIIVGHFVD, FGLILFVYTIGIQVGPGFFAS, LFAVLIVIMGGLVTAILHKIF, and MSYAMAYPFGICGILLTMWLM. 2 RCK C-terminal domains span residues 192–276 and 279–361; these read KHES…VIGK and DTSL…VVGN. The next 5 helical transmembrane spans lie at 371–391, 403–425, 437–457, 464–484, and 533–553; these read MLPVFIGIGLGVLLGSIPLFV, AGGPLIIALILGRIGSIGKLYWF, LGIVLFLAVVGLKSGGNFVNT, LSWIGYGIFITAIPLITVGLL, and LVMFLRIITPQLLAVIFWGIG.

This sequence belongs to the AAE transporter (TC 2.A.81) family. YidE subfamily.

It is found in the cell membrane. The polypeptide is Putative transport protein YidE (Salmonella arizonae (strain ATCC BAA-731 / CDC346-86 / RSK2980)).